Consider the following 748-residue polypeptide: Cytosolic phospholipase A2 (748 aa).

The tract at residues 1-178 (MSFIDPYQHI…MRKLLGPKKS (178 aa)) is phospholipid binding. A Phosphoserine modification is found at Ser-2. A C2 domain is found at 6–122 (PYQHIIVEHQ…KVGEKKEVPF (117 aa)). Ca(2+)-binding residues include Asp-40, Thr-41, Asp-43, Asn-65, Asp-93, Ala-94, and Asn-95. The PLA2c domain maps to 138–739 (VCSSPDLRFS…SNVEARRFFN (602 aa)). Catalysis depends on Ser-228, which acts as the Nucleophile. The residue at position 268 (Thr-268) is a Phosphothreonine. A disordered region spans residues 428-458 (HIVSNDSSDSDDESQEPKGTEGEDAEREYQN). 3 positions are modified to phosphoserine: Ser-434, Ser-435, and Ser-437. Residues 442-458 (QEPKGTEGEDAEREYQN) show a composition bias toward basic and acidic residues. A Phosphoserine; by MAPK modification is found at Ser-505. The residue at position 514 (Ser-514) is a Phosphoserine. Lys-540 participates in a covalent cross-link: Glycyl lysine isopeptide (Lys-Gly) (interchain with G-Cter in SUMO2). Catalysis depends on Asp-548, which acts as the Proton acceptor. Lys-605 participates in a covalent cross-link: Glycyl lysine isopeptide (Lys-Gly) (interchain with G-Cter in SUMO2). A phosphoserine mark is found at Ser-726 and Ser-728.

Interacts with KAT5. Phosphorylated at both Ser-505 and Ser-726 in response to mitogenic stimuli.

It localises to the cytoplasm. The protein resides in the golgi apparatus membrane. It is found in the nucleus envelope. The catalysed reaction is a 1,2-diacyl-sn-glycero-3-phosphocholine + H2O = a 1-acyl-sn-glycero-3-phosphocholine + a fatty acid + H(+). It carries out the reaction a 1-O-alkyl-2-acyl-sn-glycero-3-phosphocholine + H2O = a 1-O-alkyl-sn-glycero-3-phosphocholine + a fatty acid + H(+). The enzyme catalyses a 1-acyl-sn-glycero-3-phosphocholine + H2O = sn-glycerol 3-phosphocholine + a fatty acid + H(+). It catalyses the reaction 1-hexadecanoyl-2-(5Z,8Z,11Z,14Z-eicosatetraenoyl)-sn-glycero-3-phosphocholine + H2O = 1-hexadecanoyl-sn-glycero-3-phosphocholine + (5Z,8Z,11Z,14Z)-eicosatetraenoate + H(+). The catalysed reaction is 1,2-di-(5Z,8Z,11Z,14Z-eicosatetraenoyl)-sn-glycero-3-phosphocholine + H2O = 1-(5Z,8Z,11Z,14Z-eicosatetraenoyl)-sn-glycero-3-phosphocholine + (5Z,8Z,11Z,14Z)-eicosatetraenoate + H(+). It carries out the reaction 1-octadecanoyl-2-(5Z,8Z,11Z,14Z-eicosatetraenoyl)-sn-glycero-3-phosphocholine + H2O = 1-octadecanoyl-sn-glycero-3-phosphocholine + (5Z,8Z,11Z,14Z)-eicosatetraenoate + H(+). The enzyme catalyses 1-hexadecanoyl-2-(9Z,12Z-octadecadienoyl)-sn-glycero-3-phosphocholine + H2O = (9Z,12Z)-octadecadienoate + 1-hexadecanoyl-sn-glycero-3-phosphocholine + H(+). It catalyses the reaction 1-octadecanoyl-2-(9Z,12Z,15Z-octadecatrienoyl)-sn-glycero-3-phosphocholine + H2O = (9Z,12Z,15Z)-octadecatrienoate + 1-octadecanoyl-sn-glycero-3-phosphocholine + H(+). The catalysed reaction is 1-(5Z,8Z,11Z,14Z-eicosatetraenoyl)-2-hexadecanoyl-sn-glycero-3-phosphocholine + H2O = 1-(5Z,8Z,11Z,14Z-eicosatetraenoyl)-sn-glycero-3-phosphocholine + hexadecanoate + H(+). It carries out the reaction 1-O-hexadecyl-2-(5Z,8Z,11Z,14Z)-eicosatetraenoyl-sn-glycero-3-phosphocholine + H2O = 1-O-hexadecyl-sn-glycero-3-phosphocholine + (5Z,8Z,11Z,14Z)-eicosatetraenoate + H(+). The enzyme catalyses 1,2-di-(9Z-octadecenoyl)-sn-glycero-3-phospho-(1'-sn-glycerol) + H2O = 1-(9Z-octadecenoyl)-sn-glycero-3-phospho-(1'-sn-glycerol) + (9Z)-octadecenoate + H(+). It catalyses the reaction 1-octadecanoyl-2-(5Z,8Z,11Z,14Z-eicosatetraenoyl)-sn-glycero-3-phosphate + H2O = 1-octadecanoyl-sn-glycero-3-phosphate + (5Z,8Z,11Z,14Z)-eicosatetraenoate + H(+). The catalysed reaction is 1-hexadecanoyl-sn-glycero-3-phosphocholine + H2O = sn-glycerol 3-phosphocholine + hexadecanoate + H(+). It carries out the reaction 2-(prostaglandin E2)-sn-glycero-3-phosphoethanolamine + H2O = sn-glycero-3-phosphoethanolamine + prostaglandin E2 + H(+). The enzyme catalyses 2-[(15S)-hydroxy-(5Z,8Z,11Z,13E)-eicosatetraenoyl]-sn-glycero-3-phosphocholine + H2O = (15S)-hydroxy-(5Z,8Z,11Z,13E)-eicosatetraenoate + sn-glycerol 3-phosphocholine + H(+). It catalyses the reaction 2-[(15R)-hydroxy-(5Z,8Z,11Z,13E)-eicosatetraenoyl]-sn-glycero-3-phosphocholine + H2O = (15R)-hydroxy-(5Z,8Z,11Z,13E)-eicosatetraenoate + sn-glycerol 3-phosphocholine + H(+). The catalysed reaction is 2-(prostaglandin E2)-sn-glycero-3-phosphocholine + H2O = prostaglandin E2 + sn-glycerol 3-phosphocholine + H(+). It carries out the reaction 2-[(11R)-hydroxy-(5Z,8Z,12E,14Z)-eicosatetraenoyl]-sn-glycero-3-phosphocholine + H2O = (11R)-hydroxy-(5Z,8Z,12E,14Z)-eicosatetraenoate + sn-glycerol 3-phosphocholine + H(+). The enzyme catalyses 1-(5Z,8Z,11Z,14Z-eicosatetraenoyl)-2-O-hexadecyl-sn-glycero-3-phosphocholine + H2O = 2-O-hexadecyl-sn-glycero-3-phosphocholine + (5Z,8Z,11Z,14Z)-eicosatetraenoate + H(+). It catalyses the reaction 1-octadecanoyl-2-(5Z,8Z,11Z,14Z-eicosatetraenoyl)-sn-glycero-3-phosphocholine + glycerol = 1-(5Z,8Z,11Z,14Z-eicosatetraenoyl)-glycerol + 1-octadecanoyl-sn-glycero-3-phosphocholine. The catalysed reaction is 1-octadecanoyl-2-(9Z,12Z,15Z-octadecatrienoyl)-sn-glycero-3-phosphocholine + glycerol = 1-(9Z,12Z,15Z-octadecatrienoyl)-glycerol + 1-octadecanoyl-sn-glycero-3-phosphocholine. It participates in membrane lipid metabolism; glycerophospholipid metabolism. The protein operates within lipid metabolism; arachidonate metabolism. It functions in the pathway lipid metabolism; prostaglandin biosynthesis. Its pathway is lipid metabolism; leukotriene B4 biosynthesis. Its activity is regulated as follows. Activated by cytosolic calcium, which is necessary for binding to membrane lipids. Activated by phosphorylation in response to mitogenic stimuli. Its function is as follows. Has primarily calcium-dependent phospholipase and lysophospholipase activities, with a major role in membrane lipid remodeling and biosynthesis of lipid mediators of the inflammatory response. Plays an important role in embryo implantation and parturition through its ability to trigger prostanoid production. Preferentially hydrolyzes the ester bond of the fatty acyl group attached at sn-2 position of phospholipids (phospholipase A2 activity). Selectively hydrolyzes sn-2 arachidonoyl group from membrane phospholipids, providing the precursor for eicosanoid biosynthesis via the cyclooxygenase pathway. In an alternative pathway of eicosanoid biosynthesis, hydrolyzes sn-2 fatty acyl chain of eicosanoid lysophopholipids to release free bioactive eicosanoids. Hydrolyzes the ester bond of the fatty acyl group attached at sn-1 position of phospholipids (phospholipase A1 activity) only if an ether linkage rather than an ester linkage is present at the sn-2 position. This hydrolysis is not stereospecific. Has calcium-independent phospholipase A2 and lysophospholipase activities in the presence of phosphoinositides. Has O-acyltransferase activity. Catalyzes the transfer of fatty acyl chains from phospholipids to a primary hydroxyl group of glycerol (sn-1 or sn-3), potentially contributing to monoacylglycerol synthesis. This Oryctolagus cuniculus (Rabbit) protein is Cytosolic phospholipase A2 (PLA2G4A).